The primary structure comprises 90 residues: Probable Fe(2+)-trafficking protein (90 aa).

Belongs to the Fe(2+)-trafficking protein family.

Could be a mediator in iron transactions between iron acquisition and iron-requiring processes, such as synthesis and/or repair of Fe-S clusters in biosynthetic enzymes. The polypeptide is Probable Fe(2+)-trafficking protein (Pseudoalteromonas translucida (strain TAC 125)).